Here is a 158-residue protein sequence, read N- to C-terminus: S-ribosylhomocysteine lyase (158 aa).

The Fe cation site is built by His-57, His-61, and Cys-125.

The protein belongs to the LuxS family. In terms of assembly, homodimer. Fe cation serves as cofactor.

It carries out the reaction S-(5-deoxy-D-ribos-5-yl)-L-homocysteine = (S)-4,5-dihydroxypentane-2,3-dione + L-homocysteine. In terms of biological role, involved in the synthesis of autoinducer 2 (AI-2) which is secreted by bacteria and is used to communicate both the cell density and the metabolic potential of the environment. The regulation of gene expression in response to changes in cell density is called quorum sensing. Catalyzes the transformation of S-ribosylhomocysteine (RHC) to homocysteine (HC) and 4,5-dihydroxy-2,3-pentadione (DPD). This chain is S-ribosylhomocysteine lyase, found in Deinococcus radiodurans (strain ATCC 13939 / DSM 20539 / JCM 16871 / CCUG 27074 / LMG 4051 / NBRC 15346 / NCIMB 9279 / VKM B-1422 / R1).